A 357-amino-acid polypeptide reads, in one-letter code: Phosphoribosylformylglycinamidine cyclo-ligase (357 aa).

The protein belongs to the AIR synthase family.

The protein resides in the cytoplasm. The enzyme catalyses 2-formamido-N(1)-(5-O-phospho-beta-D-ribosyl)acetamidine + ATP = 5-amino-1-(5-phospho-beta-D-ribosyl)imidazole + ADP + phosphate + H(+). The protein operates within purine metabolism; IMP biosynthesis via de novo pathway; 5-amino-1-(5-phospho-D-ribosyl)imidazole from N(2)-formyl-N(1)-(5-phospho-D-ribosyl)glycinamide: step 2/2. The chain is Phosphoribosylformylglycinamidine cyclo-ligase from Rhizobium johnstonii (strain DSM 114642 / LMG 32736 / 3841) (Rhizobium leguminosarum bv. viciae).